Consider the following 89-residue polypeptide: Small ribosomal subunit protein bS20 (89 aa).

The disordered stretch occupies residues 1-25 (MANTPQSKKRARQLERRTAVNKARR).

It belongs to the bacterial ribosomal protein bS20 family.

Functionally, binds directly to 16S ribosomal RNA. The sequence is that of Small ribosomal subunit protein bS20 from Paracoccus denitrificans (strain Pd 1222).